The primary structure comprises 1315 residues: Activating molecule in BECN1-regulated autophagy protein 1A (1315 aa).

WD repeat units follow at residues 50-89 (DSPR…CVHS), 92-132 (GHRR…ESWL), and 134-174 (ESNS…TVVK). 10 disordered regions span residues 294 to 322 (RVPS…ARTE), 342 to 409 (FSSV…QRTG), 426 to 463 (FQSP…SSSI), 502 to 526 (NNNM…NPPH), 545 to 610 (SRRW…DTGQ), 630 to 660 (VYRQ…DNDY), 681 to 736 (RDSV…PRNA), 985 to 1134 (HSDG…STGQ), 1181 to 1208 (GSQT…PESL), and 1286 to 1315 (LLSS…EYGR). The segment covering 351 to 360 (NMRNHSSSSG) has biased composition (polar residues). A compositionally biased stretch (basic and acidic residues) spans 378-388 (PGREGGGRHPG). Composition is skewed to polar residues over residues 394-409 (SGLN…QRTG) and 426-435 (FQSPVYTSAS). Polar residues-rich tracts occupy residues 552 to 581 (GQPS…QSNE) and 633 to 647 (QSAS…QGAL). Low complexity predominate over residues 696-715 (RPLSSNPSSLSPSPVPNAES). A compositionally biased stretch (acidic residues) spans 716 to 725 (SEVDFEEFEE). Residues 1009–1021 (PSSSRSGDRAGSS) are compositionally biased toward low complexity. Residues 1022–1031 (RTDRRSRRDI) are compositionally biased toward basic and acidic residues. The span at 1047–1060 (SVTSQGTQTQNQRL) shows a compositional bias: polar residues. Short sequence motifs (TQT motif) lie at residues 1053–1055 (TQT) and 1065–1067 (TQT). Residues 1061–1072 (QHAETQTDRDLP) are compositionally biased toward basic and acidic residues. Residues 1076–1090 (QQPSTSQGSQVTDAT) are compositionally biased toward polar residues. Over residues 1091 to 1103 (ESLDFETLPEDSG) the composition is skewed to acidic residues. Polar residues-rich tracts occupy residues 1125-1134 (SEPSTDSTGQ) and 1181-1193 (GSQT…NRTR). The span at 1286-1307 (LLSSSPSLSPVNNSNYSNSDSS) shows a compositional bias: low complexity.

This sequence belongs to the WD repeat AMBRA1 family. As to quaternary structure, component of the DCX(AMBRA1) E3 ubiquitin ligase complex.

Its subcellular location is the endoplasmic reticulum. It is found in the cytoplasm. The protein resides in the cytoskeleton. It localises to the cytoplasmic vesicle. The protein localises to the autophagosome. Its subcellular location is the mitochondrion. It is found in the cytosol. The protein resides in the nucleus. It localises to the cell junction. The protein localises to the focal adhesion. The protein operates within protein modification; protein ubiquitination. Functionally, substrate-recognition component of a DCX (DDB1-CUL4-X-box) E3 ubiquitin-protein ligase complex involved in cell cycle control and autophagy. The DCX(AMBRA1) complex specifically mediates the polyubiquitination of target proteins. Acts as an upstream master regulator of the transition from G1 to S cell phase: ambra1a specifically recognizes and binds phosphorylated cyclin-D (ccnd1, ccnd2 and ccnd3), leading to cyclin-D ubiquitination by the DCX(AMBRA1) complex and subsequent degradation. Acts as a regulator of Cul5-RING (CRL5) E3 ubiquitin-protein ligase complexes by mediating ubiquitination and degradation of Elongin-C (eloc) component of CRL5 complexes. Acts as a key regulator of autophagy by modulating the BECN1-PIK3C3 complex: controls protein turnover during neuronal development, and regulates normal cell survival and proliferation. In normal conditions, ambra1a is tethered to the cytoskeleton via interaction with dyneins light chains. Upon autophagy induction, ambra1a is released from the cytoskeletal docking site to induce autophagosome nucleation by mediating ubiquitination of proteins involved in autophagy. Also acts as an activator of mitophagy. Required for skeletal muscle development. The sequence is that of Activating molecule in BECN1-regulated autophagy protein 1A from Danio rerio (Zebrafish).